We begin with the raw amino-acid sequence, 109 residues long: Polyprenyl transferase subC (109 aa).

A run of 2 helical transmembrane segments spans residues 39-59 and 84-104; these read LFCVLAAYLFCGAGMVWNDWI and QAFVWMALQVIASCAVLHVML.

It belongs to the UbiA prenyltransferase family. Requires Mg(2+) as cofactor.

Its subcellular location is the membrane. Its pathway is secondary metabolite biosynthesis; terpenoid biosynthesis. Functionally, polyprenyl transferase; part of the gene cluster that mediates the biosynthesis of the immunosuppressants subglutinols, meroterpenoids consisting of an alpha-pyrone (4-hydroxy-5,6-dimethyl-2-pyrone) moiety attached to a decalin core fused to a five-membered cyclic ether carrying a prenylside chain. The first step of the pathway is the synthesis of the alpha-pyrone moiety by the polyketide synthase subA via condensation of one acetyl-CoA starter unit with 3 malonyl-CoA units and 2 methylations. The alpha-pyrone is then combined with geranylgeranyl pyrophosphate (GGPP) formed by the GGPP synthase subD through the action of the prenyltransferase subC to yield a linear alpha-pyrone diterpenoid. Subsequent steps in the subglutinol biosynthetic pathway involve the decalin core formation, which is thought to be initiated by the epoxidation of the C10-C11 olefin by the FAD-dependent oxidoreductase subE. The following cyclization cascade would be catalyzed by the terpene cyclase subB. Lastly, the FAD-dependent dehydrogenase subF probably catalyzes the five-membered cyclic ether formation to complete the formation of subglutinol A. Subsequent redox reactions appear to give rise to subglutinol C and D, however, it remains unclear which enzymes are responsible for these transformations. SubD may have secondary function in the conversion of the identified subglutinols to subglutinol analog 45, which seems to be the major product of the cluster. This chain is Polyprenyl transferase subC, found in Metarhizium robertsii (strain ARSEF 23 / ATCC MYA-3075) (Metarhizium anisopliae (strain ARSEF 23)).